The following is a 33-amino-acid chain: Cytochrome b6-f complex subunit 8 (33 aa).

The chain crosses the membrane as a helical span at residues 2–22; sequence LFTLGWASLAAMFSFSIAMVV.

The protein belongs to the PetN family. In terms of assembly, the 4 large subunits of the cytochrome b6-f complex are cytochrome b6, subunit IV (17 kDa polypeptide, PetD), cytochrome f and the Rieske protein, while the 4 small subunits are PetG, PetL, PetM and PetN. The complex functions as a dimer.

It localises to the cellular thylakoid membrane. In terms of biological role, component of the cytochrome b6-f complex, which mediates electron transfer between photosystem II (PSII) and photosystem I (PSI), cyclic electron flow around PSI, and state transitions. The chain is Cytochrome b6-f complex subunit 8 from Synechococcus sp. (strain CC9605).